The following is a 460-amino-acid chain: 3-isopropylmalate dehydratase large subunit (460 aa).

Residues C338, C398, and C401 each contribute to the [4Fe-4S] cluster site.

The protein belongs to the aconitase/IPM isomerase family. LeuC type 1 subfamily. In terms of assembly, heterodimer of LeuC and LeuD. The cofactor is [4Fe-4S] cluster.

The enzyme catalyses (2R,3S)-3-isopropylmalate = (2S)-2-isopropylmalate. It functions in the pathway amino-acid biosynthesis; L-leucine biosynthesis; L-leucine from 3-methyl-2-oxobutanoate: step 2/4. Its function is as follows. Catalyzes the isomerization between 2-isopropylmalate and 3-isopropylmalate, via the formation of 2-isopropylmaleate. The protein is 3-isopropylmalate dehydratase large subunit of Streptococcus thermophilus (strain ATCC BAA-491 / LMD-9).